Here is a 134-residue protein sequence, read N- to C-terminus: MAQKTRATAARKPRRKVNKNVTQGQAHIKSTFNNTIVSITDPSGAVLSWASAGGMGFKGSRKSTPFAAQQAAEAAAKGAQEHGMRKVDVFVKGPGSGRETAIRALQATGLEVGSIQDVTPSAHNGCRPPKRRRV.

A disordered region spans residues 1–22; it reads MAQKTRATAARKPRRKVNKNVT. Over residues 9–18 the composition is skewed to basic residues; the sequence is AARKPRRKVN.

The protein belongs to the universal ribosomal protein uS11 family. As to quaternary structure, part of the 30S ribosomal subunit. Interacts with proteins S7 and S18. Binds to IF-3.

Its function is as follows. Located on the platform of the 30S subunit, it bridges several disparate RNA helices of the 16S rRNA. Forms part of the Shine-Dalgarno cleft in the 70S ribosome. In Kocuria rhizophila (strain ATCC 9341 / DSM 348 / NBRC 103217 / DC2201), this protein is Small ribosomal subunit protein uS11.